Reading from the N-terminus, the 778-residue chain is 5-methyltetrahydropteroyltriglutamate--homocysteine methyltransferase (778 aa).

5-methyltetrahydropteroyltri-L-glutamate contacts are provided by residues 17–20 and Lys-118; that span reads RELK. L-homocysteine is bound by residues 436–438 and Glu-489; that span reads IGS. Residues 436-438 and Glu-489 contribute to the L-methionine site; that span reads IGS. 5-methyltetrahydropteroyltri-L-glutamate contacts are provided by residues 520-521 and Trp-566; that span reads RC. Residue Asp-604 coordinates L-homocysteine. Asp-604 contributes to the L-methionine binding site. Glu-610 is a 5-methyltetrahydropteroyltri-L-glutamate binding site. The Zn(2+) site is built by His-646, Cys-648, and Glu-670. The active-site Proton donor is the His-699. Residue Cys-731 participates in Zn(2+) binding.

Belongs to the vitamin-B12 independent methionine synthase family. Zn(2+) is required as a cofactor.

The enzyme catalyses 5-methyltetrahydropteroyltri-L-glutamate + L-homocysteine = tetrahydropteroyltri-L-glutamate + L-methionine. Its pathway is amino-acid biosynthesis; L-methionine biosynthesis via de novo pathway; L-methionine from L-homocysteine (MetE route): step 1/1. Catalyzes the transfer of a methyl group from 5-methyltetrahydrofolate to homocysteine resulting in methionine formation. The protein is 5-methyltetrahydropteroyltriglutamate--homocysteine methyltransferase of Vibrio vulnificus (strain CMCP6).